The following is a 401-amino-acid chain: S-adenosylmethionine synthase (401 aa).

Position 16 (His-16) interacts with ATP. Asp-18 is a binding site for Mg(2+). Glu-44 is a binding site for K(+). Positions 57 and 109 each coordinate L-methionine. A flexible loop region spans residues 109–119; sequence QSAHIAQGVDA. Residues 174 to 176, Asp-251, 257 to 258, Ala-274, and Lys-278 contribute to the ATP site; these read DAK and RK. L-methionine is bound at residue Asp-251. Lys-282 lines the L-methionine pocket.

This sequence belongs to the AdoMet synthase family. In terms of assembly, homotetramer; dimer of dimers. Mg(2+) is required as a cofactor. The cofactor is K(+).

The protein resides in the cytoplasm. The catalysed reaction is L-methionine + ATP + H2O = S-adenosyl-L-methionine + phosphate + diphosphate. The protein operates within amino-acid biosynthesis; S-adenosyl-L-methionine biosynthesis; S-adenosyl-L-methionine from L-methionine: step 1/1. Its function is as follows. Catalyzes the formation of S-adenosylmethionine (AdoMet) from methionine and ATP. The overall synthetic reaction is composed of two sequential steps, AdoMet formation and the subsequent tripolyphosphate hydrolysis which occurs prior to release of AdoMet from the enzyme. This is S-adenosylmethionine synthase from Novosphingobium aromaticivorans (strain ATCC 700278 / DSM 12444 / CCUG 56034 / CIP 105152 / NBRC 16084 / F199).